The sequence spans 498 residues: Archaemetzincin-1 (498 aa).

A Zn(2+)-binding site is contributed by H261. Catalysis depends on E262, which acts as the Proton acceptor. Residues H265, C272, C277, C296, and C299 each coordinate Zn(2+). Residues 332–381 form a disordered region; it reads QEAGEPSVWEDTPPASADSGMCCESDSEPGTSVSEPLTPDAGSHTFASGP.

This sequence belongs to the peptidase M54 family. It depends on Zn(2+) as a cofactor.

Probable zinc metalloprotease. This chain is Archaemetzincin-1 (AMZ1), found in Homo sapiens (Human).